Consider the following 551-residue polypeptide: NAD(P)H-quinone oxidoreductase chain 4 (551 aa).

14 helical membrane passes run 25–45 (FPWL…VPFI), 56–76 (WFAL…YLNG), 111–131 (LILL…PVTF), 133–153 (PKLF…VFAV), 157–177 (LLFF…LAIW), 189–209 (FILY…AMGF), 233–253 (LLCY…VPLH), 264–284 (TAPV…YALM), 298–318 (FAPL…LTSF), 335–355 (MGFV…GAML), 356–376 (QMIS…ATYD), 397–417 (FALW…SGFV), 438–458 (IVID…LLSM), and 485–505 (VYII…PRLM).

It belongs to the complex I subunit 4 family.

It localises to the cellular thylakoid membrane. The catalysed reaction is a plastoquinone + NADH + (n+1) H(+)(in) = a plastoquinol + NAD(+) + n H(+)(out). The enzyme catalyses a plastoquinone + NADPH + (n+1) H(+)(in) = a plastoquinol + NADP(+) + n H(+)(out). Functionally, NDH-1 shuttles electrons from NAD(P)H, via FMN and iron-sulfur (Fe-S) centers, to quinones in the respiratory chain. The immediate electron acceptor for the enzyme in this species is believed to be plastoquinone. Couples the redox reaction to proton translocation (for every two electrons transferred, four hydrogen ions are translocated across the cytoplasmic membrane), and thus conserves the redox energy in a proton gradient. The sequence is that of NAD(P)H-quinone oxidoreductase chain 4 from Synechococcus sp. (strain WH7803).